Consider the following 595-residue polypeptide: Sialic acid-binding Ig-like lectin 12 (595 aa).

The signal sequence occupies residues 1-18; that stretch reads MLLLLLLLPPLLCGRVGA. 2 Ig-like V-type domains span residues 19–142 and 143–269; these read KEQK…VNVT and ASQD…VHVT. Residues 19-481 are Extracellular-facing; sequence KEQKDYLLTM…RPISGVTLGA (463 aa). An intrachain disulfide couples C44 to C104. N-linked (GlcNAc...) asparagine glycosylation is found at N140, N179, N230, and N290. Disulfide bonds link C166–C299, C171–C231, and C293–C342. Residues 275 to 358 enclose the Ig-like C2-type 1 domain; that stretch reads PTFSIPGTLE…AGVTMTRAVR (84 aa). Residues N360, N367, and N385 are each glycosylated (N-linked (GlcNAc...) asparagine). In terms of domain architecture, Ig-like C2-type 2 spans 365 to 462; sequence PQNLTMTVFQ…GSQHISLSLS (98 aa). A disulfide bridge links C401 with C446. A helical membrane pass occupies residues 482-502; it reads FGGAGATALVFLYFCIIFVVV. Topologically, residues 503–595 are cytoplasmic; the sequence is RSCRKKSARP…YEYSEINIPK (93 aa). Positions 512–560 are disordered; the sequence is PAVGVGDTGMEDANAVRGSASQGPLIESPADDSPPHHAPPALATPSPEE. An ITIM motif motif is present at residues 563 to 568; the sequence is IQYASL. 2 positions are modified to phosphotyrosine: Y565 and Y588. The short motif at 586-591 is the SLAM-like motif element; that stretch reads YEYSEI.

The protein belongs to the immunoglobulin superfamily. SIGLEC (sialic acid binding Ig-like lectin) family. As to expression, isoform Short is highly expressed in spleen, small intestine and adrenal gland; it is lower expressed in thyroid, placenta, brain, stomach, bone marrow, spinal cord and breast. Isoform Long is highly expressed in spleen, small intestine and bone marrow; it is lower expressed in thyroid, placenta, thymus, trachea, stomach, lung, adrenal gland, fetal brain and testis.

It localises to the membrane. Its function is as follows. Putative adhesion molecule that mediates sialic-acid dependent binding to cells. The sialic acid recognition site may be masked by cis interactions with sialic acids on the same cell surface. This Homo sapiens (Human) protein is Sialic acid-binding Ig-like lectin 12 (SIGLEC12).